Reading from the N-terminus, the 516-residue chain is Gastrula zinc finger protein XlCGF53.1 (516 aa).

Disordered regions lie at residues 1-33 (MGMWEEASDTGMKGKKKKKDKNEEEEEERGKKE) and 200-220 (GNQSDCSINPLTEQIQGTDKP). The span at 200–218 (GNQSDCSINPLTEQIQGTD) shows a compositional bias: polar residues. 7 consecutive C2H2-type zinc fingers follow at residues 312 to 334 (YICSECQKHFSTKAGLARHQKTH), 354 to 376 (FPCSECGKRFARRQHLTDHQSSH), 382 to 404 (YACSQCEKYFPHRSNLNRHLKLH), 410 to 432 (FPCSQCGKRFPCVSDLNIHRRVH), 438 to 460 (YSCSECGKCFKHHSNLTNHQRTH), 466 to 488 (FSCTECGKGFKDRSSLTVHHRTH), and 494 to 516 (FSCTECGKGFKDRSSLTVHHRTH).

The protein belongs to the krueppel C2H2-type zinc-finger protein family.

The protein resides in the nucleus. Functionally, may be involved in transcriptional regulation. The chain is Gastrula zinc finger protein XlCGF53.1 from Xenopus laevis (African clawed frog).